Reading from the N-terminus, the 196-residue chain is Molybdenum cofactor guanylyltransferase (196 aa).

Residues 10-12, lysine 23, asparagine 51, aspartate 69, and aspartate 99 each bind GTP; that span reads LAG. Aspartate 99 is a Mg(2+) binding site.

Belongs to the MobA family. Monomer. The cofactor is Mg(2+).

The protein resides in the cytoplasm. It carries out the reaction Mo-molybdopterin + GTP + H(+) = Mo-molybdopterin guanine dinucleotide + diphosphate. Its function is as follows. Transfers a GMP moiety from GTP to Mo-molybdopterin (Mo-MPT) cofactor (Moco or molybdenum cofactor) to form Mo-molybdopterin guanine dinucleotide (Mo-MGD) cofactor. The polypeptide is Molybdenum cofactor guanylyltransferase (Shewanella sediminis (strain HAW-EB3)).